Reading from the N-terminus, the 609-residue chain is MPSTFDSKLFLKTVSSSPGVYRMYDEEGTVIYVGKAKDLKKRLSSYFRVNLPNVKTQALVSHIANIDVTVTHSETDALILENDYIKQYMPRYNVLLRDDKSYPYILLSDHKHPRLAYHRGPKRDKGSYFGPYPNGGAVRESLHLLQKIFPIRQCDDLYYKSRSRPCLQYQIGRCSAPCVNKVSDEEYAVQVKLASLFLKGKDLQVMTELVSKMEASALALEYEQAASYRDQIAALRRVAEQQEVSNTSGDMDVIGAYYASGVACFHLLFIREGKIFGSRSYYPSVPAETELDEVLSAFMIQFYLNSDSQRTVPKEILLSHGFDDLPELERAIQTALEKKVEIKTNVRSERANFLRLAVTNATNAVNTRLSHKNTVEQRFLLLEEALEVSTLIQRMECFDISHTMGESTVASCVVFDREGPNKADYRRYNINGITPGDDYAAMKQAITRRFDKIDKNGKIPDLLFIDGGTGQLRIAQKIVDEKFVDIDKTPMLIGVAKGEGRKPGLETLIYGENEQSFTIPADSGALHLIQHIRDESHRFAITGHRNKRQKTRNTSTLESIAGVGPKRRKALLQYLGGIQEVKGASVAELAKVPGISLEMAQTIHDSLRG.

Residues 16-94 (SSPGVYRMYD…IKQYMPRYNV (79 aa)) enclose the GIY-YIG domain. In terms of domain architecture, UVR spans 203–238 (LQVMTELVSKMEASALALEYEQAASYRDQIAALRRV).

This sequence belongs to the UvrC family. Interacts with UvrB in an incision complex.

It localises to the cytoplasm. Its function is as follows. The UvrABC repair system catalyzes the recognition and processing of DNA lesions. UvrC both incises the 5' and 3' sides of the lesion. The N-terminal half is responsible for the 3' incision and the C-terminal half is responsible for the 5' incision. The protein is UvrABC system protein C of Shewanella sediminis (strain HAW-EB3).